Here is a 260-residue protein sequence, read N- to C-terminus: Snake venom serine protease KN5 (260 aa).

Positions 1–18 are cleaved as a signal peptide; the sequence is MVLIRVLANLLILQLSYA. A propeptide spanning residues 19–24 is cleaved from the precursor; the sequence is QKSSEL. In terms of domain architecture, Peptidase S1 spans 25–251; it reads VIGGDECNIN…HLDWIQSIIA (227 aa). 5 cysteine pairs are disulfide-bonded: C31/C165, C100/C258, C144/C212, C176/C191, and C202/C227. The active-site Charge relay system is H67. Residue N105 is glycosylated (N-linked (GlcNAc...) asparagine). Residue D112 is the Charge relay system of the active site. N124 and N172 each carry an N-linked (GlcNAc...) asparagine glycan. The active-site Charge relay system is S206. N-linked (GlcNAc...) asparagine glycans are attached at residues N213 and N255.

The protein belongs to the peptidase S1 family. Snake venom subfamily. In terms of assembly, monomer. In terms of tissue distribution, expressed by the venom gland.

Its subcellular location is the secreted. Functionally, snake venom serine protease that may act in the hemostasis system of the prey. The sequence is that of Snake venom serine protease KN5 from Trimeresurus stejnegeri (Chinese green tree viper).